The following is an 80-amino-acid chain: Sec-independent protein translocase protein TatA (80 aa).

The helical transmembrane segment at 1–21 threads the bilayer; it reads MGQIGIWQILIIALVILVLFG. Positions 38-80 are disordered; the sequence is SFKKGLNEEDKPAEPAAKIEGPSHEAKPAGEAAKDPRPADKQG. The segment covering 58–80 has biased composition (basic and acidic residues); it reads GPSHEAKPAGEAAKDPRPADKQG.

This sequence belongs to the TatA/E family. In terms of assembly, the Tat system comprises two distinct complexes: a TatABC complex, containing multiple copies of TatA, TatB and TatC subunits, and a separate TatA complex, containing only TatA subunits. Substrates initially bind to the TatABC complex, which probably triggers association of the separate TatA complex to form the active translocon.

It is found in the cell inner membrane. Its function is as follows. Part of the twin-arginine translocation (Tat) system that transports large folded proteins containing a characteristic twin-arginine motif in their signal peptide across membranes. TatA could form the protein-conducting channel of the Tat system. The chain is Sec-independent protein translocase protein TatA from Erythrobacter litoralis (strain HTCC2594).